The primary structure comprises 250 residues: Probable dihydroorotate dehydrogenase B (NAD(+)), electron transfer subunit (250 aa).

Positions 1–89 constitute an FAD-binding FR-type domain; that stretch reads MNRITVDQVR…RGPYGNGFQI (89 aa). [2Fe-2S] cluster is bound by residues Cys200, Cys205, Cys208, and Cys216.

The protein belongs to the PyrK family. In terms of assembly, heterotetramer of 2 PyrK and 2 PyrD type B subunits. Requires [2Fe-2S] cluster as cofactor. FAD serves as cofactor.

It participates in pyrimidine metabolism; UMP biosynthesis via de novo pathway; orotate from (S)-dihydroorotate (NAD(+) route): step 1/1. Responsible for channeling the electrons from the oxidation of dihydroorotate from the FMN redox center in the PyrD type B subunit to the ultimate electron acceptor NAD(+). The chain is Probable dihydroorotate dehydrogenase B (NAD(+)), electron transfer subunit from Thermoplasma acidophilum (strain ATCC 25905 / DSM 1728 / JCM 9062 / NBRC 15155 / AMRC-C165).